The sequence spans 619 residues: MTESKAYRFGAVLLLIHLIFLVPGTEAASFQRNQLLQKEPDLRLENVQKFPSPEMIRALEYIEKLRQQAHREESSPDYNPYQGISVPLQLKENGEESHLAESSRDVLSEDEWMRIILEALRQAENEPPSALKENKPYALNLEKNFPVDTPDDYETQQWPERKLKHMRFPLMYEENSRENPFKRTNEIVEEQYTPQSLATLESVFQELGKLTGPSNQKRERVDEEQKLYTDDEDDVYKTNNIAYEDVVGGEDWSPMEEKIETQTQEEVRDSKENTEKNEQINEEMKRSGHLGLPDEGNRKESKDQLSEDASKVITYLRRLVNAVGSGRSQSGQNGDRAARLLERPLDSQSIYQLIEISRNLQIPPEDLIEMLKAGEKPNGLVEPEQDLELAVDLDDIPEADIDRPDMFQSKTLSKGGYPKAPGRGMMEALPDGLSVEDILNVLGMENVANQKSPYFPNQYSRDKALLRLPYGPGKSRANQIPKVAWIPDVESRQAPYDNLNDKDQELGEYLARMLVKYPELMNTNQLKRVPSPGSSEDDLQEEEQLEQAIKEHLGQGSSQEMEKLAKVSKRIPAGSLKNEDTPNRQYLDEDMLLKVLEYLNQEQAEQGREHLAKRAMENM.

The N-terminal stretch at 1 to 30 is a signal peptide; the sequence is MTESKAYRFGAVLLLIHLIFLVPGTEAASF. Tyr153 carries the sulfotyrosine modification. Phosphoserine occurs at positions 176 and 270. The segment at 247 to 307 is disordered; it reads VGGEDWSPME…RKESKDQLSE (61 aa). Composition is skewed to basic and acidic residues over residues 255–286 and 295–307; these read MEEK…EMKR and EGNR…QLSE. Ser434, Ser534, Ser557, and Ser558 each carry phosphoserine.

It belongs to the chromogranin/secretogranin protein family. In terms of assembly, interacts with Secretogranin III/SCG3. As to expression, brain. Expression in the pituitary is restricted to the anterior lobe. Expression in the hypothalamus is observed in the neuronal cells and neurons of arcuate nucleus, supraoptic nucleus and median eminence (at protein level).

It is found in the secreted. Functionally, neuroendocrine protein of the granin family that regulates the biogenesis of secretory granules. The sequence is that of Secretogranin-2 (Scg2) from Rattus norvegicus (Rat).